A 204-amino-acid chain; its full sequence is Holliday junction branch migration complex subunit RuvA (204 aa).

The interval 1 to 64 (MIGRLRGILL…EDAQLLYGFN (64 aa)) is domain I. Residues 65–143 (TVKERALFRE…GWGAGDLFTP (79 aa)) form a domain II region. The tract at residues 144-155 (FTDAAPTDSAAA) is flexible linker. The segment at 156-204 (SSNSAEEEAVSALLALGYKPTQASKVVSQIAKPDMSSEQLIREALKSMV) is domain III.

Belongs to the RuvA family. Homotetramer. Forms an RuvA(8)-RuvB(12)-Holliday junction (HJ) complex. HJ DNA is sandwiched between 2 RuvA tetramers; dsDNA enters through RuvA and exits via RuvB. An RuvB hexamer assembles on each DNA strand where it exits the tetramer. Each RuvB hexamer is contacted by two RuvA subunits (via domain III) on 2 adjacent RuvB subunits; this complex drives branch migration. In the full resolvosome a probable DNA-RuvA(4)-RuvB(12)-RuvC(2) complex forms which resolves the HJ.

The protein resides in the cytoplasm. Functionally, the RuvA-RuvB-RuvC complex processes Holliday junction (HJ) DNA during genetic recombination and DNA repair, while the RuvA-RuvB complex plays an important role in the rescue of blocked DNA replication forks via replication fork reversal (RFR). RuvA specifically binds to HJ cruciform DNA, conferring on it an open structure. The RuvB hexamer acts as an ATP-dependent pump, pulling dsDNA into and through the RuvAB complex. HJ branch migration allows RuvC to scan DNA until it finds its consensus sequence, where it cleaves and resolves the cruciform DNA. This Vibrio parahaemolyticus serotype O3:K6 (strain RIMD 2210633) protein is Holliday junction branch migration complex subunit RuvA.